Consider the following 316-residue polypeptide: Acetylglutamate kinase (316 aa).

Residues 65–66 (GG), Arg87, and Asn179 each bind substrate.

The protein belongs to the acetylglutamate kinase family. ArgB subfamily.

It localises to the cytoplasm. It carries out the reaction N-acetyl-L-glutamate + ATP = N-acetyl-L-glutamyl 5-phosphate + ADP. The protein operates within amino-acid biosynthesis; L-arginine biosynthesis; N(2)-acetyl-L-ornithine from L-glutamate: step 2/4. Its function is as follows. Catalyzes the ATP-dependent phosphorylation of N-acetyl-L-glutamate. The protein is Acetylglutamate kinase of Alkaliphilus metalliredigens (strain QYMF).